The sequence spans 328 residues: Phosphate acetyltransferase (328 aa).

This sequence belongs to the phosphate acetyltransferase and butyryltransferase family.

The protein resides in the cytoplasm. It carries out the reaction acetyl-CoA + phosphate = acetyl phosphate + CoA. It participates in metabolic intermediate biosynthesis; acetyl-CoA biosynthesis; acetyl-CoA from acetate: step 2/2. In Staphylococcus aureus (strain MRSA252), this protein is Phosphate acetyltransferase (pta).